Reading from the N-terminus, the 248-residue chain is 5'-nucleotidase SurE (248 aa).

Positions 8, 9, 39, and 91 each coordinate a divalent metal cation.

It belongs to the SurE nucleotidase family. It depends on a divalent metal cation as a cofactor.

It localises to the cytoplasm. It carries out the reaction a ribonucleoside 5'-phosphate + H2O = a ribonucleoside + phosphate. In terms of biological role, nucleotidase that shows phosphatase activity on nucleoside 5'-monophosphates. The sequence is that of 5'-nucleotidase SurE from Geotalea uraniireducens (strain Rf4) (Geobacter uraniireducens).